A 190-amino-acid chain; its full sequence is NADH-quinone oxidoreductase subunit B (190 aa).

4 residues coordinate [4Fe-4S] cluster: Cys-67, Cys-68, Cys-132, and Cys-162.

Belongs to the complex I 20 kDa subunit family. In terms of assembly, NDH-1 is composed of 14 different subunits. Subunits NuoB, C, D, E, F, and G constitute the peripheral sector of the complex. [4Fe-4S] cluster is required as a cofactor.

Its subcellular location is the cell inner membrane. It carries out the reaction a quinone + NADH + 5 H(+)(in) = a quinol + NAD(+) + 4 H(+)(out). NDH-1 shuttles electrons from NADH, via FMN and iron-sulfur (Fe-S) centers, to quinones in the respiratory chain. The immediate electron acceptor for the enzyme in this species is believed to be ubiquinone. Couples the redox reaction to proton translocation (for every two electrons transferred, four hydrogen ions are translocated across the cytoplasmic membrane), and thus conserves the redox energy in a proton gradient. This chain is NADH-quinone oxidoreductase subunit B, found in Anaplasma marginale (strain Florida).